The primary structure comprises 142 residues: MKVYFCGSIRGGRDDAELYHRMVAKLQSFATVLTEHVGRRELGDTGEHVTQGDRFIHDRDVDWLRQSDVVVAEVTQPSLGVGYELGRAVDMKKKVLCLFRPSSGRRLSAMIRGADNGDSFVVRDYCQDEIEQVLEDFFSNQK.

8 residues coordinate 5-hydroxymethyl-dUMP: glycine 7, isoleucine 9, arginine 10, glycine 11, serine 78, glycine 80, glutamate 84, and serine 108.

Belongs to the 2'-deoxynucleoside 5'-phosphate N-hydrolase 1 family. As to quaternary structure, monomer and homodimer.

Its subcellular location is the cytoplasm. The protein localises to the nucleus. It carries out the reaction 5-hydroxymethyl-dUMP + H2O = 5-hydroxymethyluracil + 2-deoxy-D-ribose 5-phosphate. Its function is as follows. Part of a nucleotide salvage pathway that eliminates epigenetically modified 5-hydroxymethyl-dCMP (hmdCMP) in a two-step process entailing deamination to cytotoxic 5-hydroxymethyl-dUMP (hmdUMP), followed by its hydrolysis into 5-hydroxymethyluracil (hmU) and 2-deoxy-D-ribose 5-phosphate (deoxyribosephosphate). Catalyzes the second step in that pathway, the hydrolysis of the N-glycosidic bond in hmdUMP, degrading this cytotoxic nucleotide to avoid its genomic integration. The polypeptide is 5-hydroxymethyl-dUMP N-hydrolase (dnph1) (Tetraodon nigroviridis (Spotted green pufferfish)).